The chain runs to 205 residues: Lymphotoxin-alpha (205 aa).

The signal sequence occupies residues 1–34; sequence MTPPERLFLPRVRGTTLHLLLLGLLLVLLPGAQG. Threonine 41 carries an O-linked (GalNAc...) threonine glycan. The 143-residue stretch at 63 to 205 folds into the THD domain; sequence PAAHLIGDPS…STVFFGAFAL (143 aa). An N-linked (GlcNAc...) asparagine glycan is attached at asparagine 96.

The protein belongs to the tumor necrosis factor family. As to quaternary structure, homotrimer, and heterotrimer of either two LTB and one LTA subunits or (less prevalent) two LTA and one LTB subunits. Interacts with TNFRSF14.

It localises to the secreted. Its subcellular location is the membrane. In terms of biological role, cytokine that in its homotrimeric form binds to TNFRSF1A/TNFR1, TNFRSF1B/TNFBR and TNFRSF14/HVEM. In its heterotrimeric form with LTB binds to TNFRSF3/LTBR. Lymphotoxin is produced by lymphocytes and is cytotoxic for a wide range of tumor cells in vitro and in vivo. This chain is Lymphotoxin-alpha (LTA), found in Pan troglodytes (Chimpanzee).